The chain runs to 149 residues: Deoxyuridine 5'-triphosphate nucleotidohydrolase (149 aa).

Residues 70–72, Asn83, and 87–89 each bind substrate; these read RSG and LID.

It belongs to the dUTPase family. Requires Mg(2+) as cofactor.

The catalysed reaction is dUTP + H2O = dUMP + diphosphate + H(+). It participates in pyrimidine metabolism; dUMP biosynthesis; dUMP from dCTP (dUTP route): step 2/2. This enzyme is involved in nucleotide metabolism: it produces dUMP, the immediate precursor of thymidine nucleotides and it decreases the intracellular concentration of dUTP so that uracil cannot be incorporated into DNA. The protein is Deoxyuridine 5'-triphosphate nucleotidohydrolase of Blochmanniella pennsylvanica (strain BPEN).